The sequence spans 375 residues: uncharacterized protein (375 aa).

The first 20 residues, 1–20, serve as a signal peptide directing secretion; the sequence is MKNKLFIILIIFIILKIVIC. Residues 21–335 are Extracellular-facing; it reads QNTTPSKLIP…EKQVERKITP (315 aa). Residues 30–42 show a composition bias toward low complexity; sequence PQQQQKQKQQQTQ. 2 disordered regions span residues 30-74 and 113-253; these read PQQQ…QPQQ and SQNV…PHNH. The span at 43–53 shows a compositional bias: basic residues; sequence PHHHHHHHQQH. The segment covering 54–74 has biased composition (low complexity); the sequence is QQHQQQHQPNQQIKQQQQPQQ. Basic residues predominate over residues 120–151; sequence PPHHTQQRVPHHHGPNGAPHHHGPNGAPHHHG. Polar residues predominate over residues 168–180; that stretch reads GHNTQGHVQTNHV. The segment covering 181–220 has biased composition (low complexity); that stretch reads NNINKNNINNNNNNNNNNNNNNNNNNNNNINDNKNIRNNI. The helical transmembrane segment at 336–356 threads the bilayer; the sequence is IMVLYILLASTMVIQLFIMVF. The Cytoplasmic segment spans residues 357-375; that stretch reads KQVKHIREINAKTTMESLL.

It localises to the membrane. This is an uncharacterized protein from Dictyostelium discoideum (Social amoeba).